The primary structure comprises 197 residues: dITP/XTP pyrophosphatase (197 aa).

8 to 13 (TGNAGK) is a binding site for substrate. Mg(2+) contacts are provided by E40 and D69. D69 serves as the catalytic Proton acceptor. Substrate contacts are provided by residues S70, 154–157 (FGYD), K177, and 182–183 (HR).

Belongs to the HAM1 NTPase family. As to quaternary structure, homodimer. Requires Mg(2+) as cofactor.

It catalyses the reaction XTP + H2O = XMP + diphosphate + H(+). It carries out the reaction dITP + H2O = dIMP + diphosphate + H(+). The enzyme catalyses ITP + H2O = IMP + diphosphate + H(+). Pyrophosphatase that catalyzes the hydrolysis of nucleoside triphosphates to their monophosphate derivatives, with a high preference for the non-canonical purine nucleotides XTP (xanthosine triphosphate), dITP (deoxyinosine triphosphate) and ITP. Seems to function as a house-cleaning enzyme that removes non-canonical purine nucleotides from the nucleotide pool, thus preventing their incorporation into DNA/RNA and avoiding chromosomal lesions. The sequence is that of dITP/XTP pyrophosphatase (rdgB) from Shigella flexneri.